A 356-amino-acid polypeptide reads, in one-letter code: Nicotinate-nucleotide--dimethylbenzimidazole phosphoribosyltransferase (356 aa).

The active-site Proton acceptor is the Glu-317.

It belongs to the CobT family. In terms of assembly, homodimer.

It catalyses the reaction 5,6-dimethylbenzimidazole + nicotinate beta-D-ribonucleotide = alpha-ribazole 5'-phosphate + nicotinate + H(+). The protein operates within nucleoside biosynthesis; alpha-ribazole biosynthesis; alpha-ribazole from 5,6-dimethylbenzimidazole: step 1/2. Catalyzes the synthesis of alpha-ribazole-5'-phosphate from nicotinate mononucleotide (NAMN) and 5,6-dimethylbenzimidazole (DMB). The polypeptide is Nicotinate-nucleotide--dimethylbenzimidazole phosphoribosyltransferase (Salmonella dublin (strain CT_02021853)).